The sequence spans 214 residues: Pyrrolidone-carboxylate peptidase (214 aa).

Catalysis depends on residues E80, C143, and H166.

It belongs to the peptidase C15 family. In terms of assembly, homotetramer.

It is found in the cytoplasm. It catalyses the reaction Release of an N-terminal pyroglutamyl group from a polypeptide, the second amino acid generally not being Pro.. Functionally, removes 5-oxoproline from various penultimate amino acid residues except L-proline. The chain is Pyrrolidone-carboxylate peptidase from Klebsiella pneumoniae (strain 342).